The primary structure comprises 229 residues: Molybdenum transport system permease protein ModB (229 aa).

Residues 6 to 214 (INLSLSVAVS…LISLLLSEWL (209 aa)) form the ABC transmembrane type-1 domain. The next 5 helical transmembrane spans lie at 12-32 (VAVS…WLLA), 45-65 (VIHL…LVAM), 83-103 (FGFS…PLVV), 132-152 (FFTI…VLGF), and 196-216 (LCLF…WLSK).

It belongs to the binding-protein-dependent transport system permease family. CysTW subfamily.

The protein resides in the cell inner membrane. In terms of biological role, part of the binding-protein-dependent transport system for molybdenum; probably responsible for the translocation of the substrate across the membrane. The protein is Molybdenum transport system permease protein ModB (modB) of Haemophilus influenzae (strain ATCC 51907 / DSM 11121 / KW20 / Rd).